The chain runs to 241 residues: Triosephosphate isomerase (241 aa).

N9–K11 provides a ligand contact to substrate. Catalysis depends on H96, which acts as the Electrophile. E165 acts as the Proton acceptor in catalysis. Substrate is bound by residues G171, S204, and G225–G226.

Belongs to the triosephosphate isomerase family. Homodimer.

It is found in the cytoplasm. It catalyses the reaction D-glyceraldehyde 3-phosphate = dihydroxyacetone phosphate. The protein operates within carbohydrate biosynthesis; gluconeogenesis. It participates in carbohydrate degradation; glycolysis; D-glyceraldehyde 3-phosphate from glycerone phosphate: step 1/1. Involved in the gluconeogenesis. Catalyzes stereospecifically the conversion of dihydroxyacetone phosphate (DHAP) to D-glyceraldehyde-3-phosphate (G3P). The protein is Triosephosphate isomerase of Trichodesmium erythraeum (strain IMS101).